The primary structure comprises 555 residues: Potassium-transporting ATPase potassium-binding subunit (555 aa).

A run of 10 helical transmembrane segments spans residues 2–22, 60–80, 130–150, 173–193, 246–266, 278–298, 374–394, 412–432, 483–503, and 525–545; these read IWVA…PTGI, QYAL…YFIF, IGIT…VMAF, VFLP…VPQT, MSNI…PFTY, ILFV…TTSE, AGFV…GLMV, LIAV…ALAL, LVMF…AASL, and GIFI…MLVL.

This sequence belongs to the KdpA family. The system is composed of three essential subunits: KdpA, KdpB and KdpC.

The protein resides in the cell membrane. Part of the high-affinity ATP-driven potassium transport (or Kdp) system, which catalyzes the hydrolysis of ATP coupled with the electrogenic transport of potassium into the cytoplasm. This subunit binds the extracellular potassium ions and delivers the ions to the membrane domain of KdpB through an intramembrane tunnel. This is Potassium-transporting ATPase potassium-binding subunit from Bacillus cereus (strain ZK / E33L).